The chain runs to 307 residues: 4-diphosphocytidyl-2-C-methyl-D-erythritol kinase (307 aa).

Residue Lys-14 is part of the active site. Residue 107-117 (PVAGGMAGGSA) coordinates ATP. Residue Asp-149 is part of the active site.

Belongs to the GHMP kinase family. IspE subfamily.

The enzyme catalyses 4-CDP-2-C-methyl-D-erythritol + ATP = 4-CDP-2-C-methyl-D-erythritol 2-phosphate + ADP + H(+). Its pathway is isoprenoid biosynthesis; isopentenyl diphosphate biosynthesis via DXP pathway; isopentenyl diphosphate from 1-deoxy-D-xylulose 5-phosphate: step 3/6. Its function is as follows. Catalyzes the phosphorylation of the position 2 hydroxy group of 4-diphosphocytidyl-2C-methyl-D-erythritol. This is 4-diphosphocytidyl-2-C-methyl-D-erythritol kinase from Thermobifida fusca (strain YX).